The chain runs to 229 residues: Glutathione S-transferase 3 (229 aa).

Residue alanine 2 is modified to Blocked amino end (Ala). Positions 3–83 constitute a GST N-terminal domain; sequence AKPVLYYFNG…YIAGKYNLYG (81 aa). Residues tyrosine 9, 54 to 55, and 67 to 68 each bind glutathione; these read QV and QT. Positions 85 to 207 constitute a GST C-terminal domain; it reads DLKERALIDM…LAPGSKRKPI (123 aa).

Belongs to the GST superfamily. Alpha family. As to quaternary structure, homodimer or heterodimer (with a subunit from group CL-4).

It localises to the cytoplasm. The enzyme catalyses RX + glutathione = an S-substituted glutathione + a halide anion + H(+). Its function is as follows. Catalyzes the conjugation of GSH to a wide variety of electrophilic alkylating agents. Also involved in the metabolism of lipid hydroperoxides, prostaglandins and leukotriene A4 and in binding of non-substrate hydrophobic ligands such as bile acids, a number of drugs and thyroid hormones. This GST does not exhibit peroxidase activity. The sequence is that of Glutathione S-transferase 3 from Gallus gallus (Chicken).